We begin with the raw amino-acid sequence, 640 residues long: Replication protein A 70 kDa DNA-binding subunit A (640 aa).

Positions 211–293 form a DNA-binding region, OB; it reads AIKARVTAKG…NHLKNEWEIF (83 aa). The segment at 503 to 529 adopts a C4-type zinc-finger fold; sequence CPLMIGDKQCNKKVTRSGTNRWLCDRC.

Belongs to the replication factor A protein 1 family. As to quaternary structure, heterotrimer of RPA1, RPA2 and RPA3 (canonical replication protein A complex). Interacts with RPA2A. In terms of tissue distribution, expressed in roots, leaves, stalks and flower buds.

The protein localises to the nucleus. In terms of biological role, component of the replication protein A complex (RPA) required for DNA recombination, repair and replication. The activity of RPA is mediated by single-stranded DNA binding and protein interactions. Plays an essential role at later stages of meiotic recombination events required for the formation of class I crossovers. Is essential for normal progression through meiosis in pollen mother cells. Is involved in repair of double-strand DNA breaks (DSBs) induced by genotoxic stresses, but does not seem to be required for the repair of meiotic DSBs. This is Replication protein A 70 kDa DNA-binding subunit A (RPA1A) from Arabidopsis thaliana (Mouse-ear cress).